Reading from the N-terminus, the 376-residue chain is Dehydrogenase/reductase SDR family member FEY (376 aa).

S2 is subject to N-acetylserine. 61–85 (VVTGSTSGIGRETARQLAEAGAHVV) serves as a coordination point for NAD(+). A substrate-binding site is contributed by S199. Catalysis depends on Y227, which acts as the Proton acceptor.

Belongs to the short-chain dehydrogenases/reductases (SDR) family. In terms of tissue distribution, expressed in roots, stems, leaves and flowers and, at lower levels, in siliques.

Functionally, putative oxidoreductase. Required for vegetative shoot apex development, especially during leaf positioning and for shoot apical meristem (SAM) maintenance. This chain is Dehydrogenase/reductase SDR family member FEY, found in Arabidopsis thaliana (Mouse-ear cress).